Here is a 350-residue protein sequence, read N- to C-terminus: Biotin synthase (350 aa).

A Radical SAM core domain is found at 54 to 278 (REIQLSTLLS…TMPQSYVRLS (225 aa)). [4Fe-4S] cluster contacts are provided by C69, C73, and C76. Residues C113, C144, C204, and R276 each contribute to the [2Fe-2S] cluster site.

The protein belongs to the radical SAM superfamily. Biotin synthase family. Homodimer. [4Fe-4S] cluster is required as a cofactor. The cofactor is [2Fe-2S] cluster.

The catalysed reaction is (4R,5S)-dethiobiotin + (sulfur carrier)-SH + 2 reduced [2Fe-2S]-[ferredoxin] + 2 S-adenosyl-L-methionine = (sulfur carrier)-H + biotin + 2 5'-deoxyadenosine + 2 L-methionine + 2 oxidized [2Fe-2S]-[ferredoxin]. The protein operates within cofactor biosynthesis; biotin biosynthesis; biotin from 7,8-diaminononanoate: step 2/2. Its function is as follows. Catalyzes the conversion of dethiobiotin (DTB) to biotin by the insertion of a sulfur atom into dethiobiotin via a radical-based mechanism. The polypeptide is Biotin synthase (Neisseria meningitidis serogroup C (strain 053442)).